A 414-amino-acid polypeptide reads, in one-letter code: BICD family-like cargo adapter 2 (414 aa).

Residues 34–341 are a coiled coil; sequence GQALLEKNEE…DALNQQLLNT (308 aa). Over residues 372 to 384 the composition is skewed to basic and acidic residues; the sequence is QEKEKENNKERTG. The segment at 372–399 is disordered; that stretch reads QEKEKENNKERTGFQRGTRTTKSLRLRG.

In Danio rerio (Zebrafish), this protein is BICD family-like cargo adapter 2 (bicdl2).